The following is a 341-amino-acid chain: Biotin synthase (341 aa).

A Radical SAM core domain is found at 40 to 267 (AEIQVSTLLS…RSMVRLSAGR (228 aa)). 3 residues coordinate [4Fe-4S] cluster: cysteine 55, cysteine 59, and cysteine 62. [2Fe-2S] cluster-binding residues include cysteine 99, cysteine 130, cysteine 190, and arginine 262.

This sequence belongs to the radical SAM superfamily. Biotin synthase family. In terms of assembly, homodimer. Requires [4Fe-4S] cluster as cofactor. The cofactor is [2Fe-2S] cluster.

The catalysed reaction is (4R,5S)-dethiobiotin + (sulfur carrier)-SH + 2 reduced [2Fe-2S]-[ferredoxin] + 2 S-adenosyl-L-methionine = (sulfur carrier)-H + biotin + 2 5'-deoxyadenosine + 2 L-methionine + 2 oxidized [2Fe-2S]-[ferredoxin]. Its pathway is cofactor biosynthesis; biotin biosynthesis; biotin from 7,8-diaminononanoate: step 2/2. In terms of biological role, catalyzes the conversion of dethiobiotin (DTB) to biotin by the insertion of a sulfur atom into dethiobiotin via a radical-based mechanism. The protein is Biotin synthase of Xylella fastidiosa (strain M23).